Reading from the N-terminus, the 248-residue chain is DNA polymerase sliding clamp (248 aa).

This sequence belongs to the PCNA family. In terms of assembly, homotrimer. The subunits circularize to form a toroid; DNA passes through its center. Replication factor C (RFC) is required to load the toroid on the DNA.

Functionally, sliding clamp subunit that acts as a moving platform for DNA processing. Responsible for tethering the catalytic subunit of DNA polymerase and other proteins to DNA during high-speed replication. This Cenarchaeum symbiosum (strain A) protein is DNA polymerase sliding clamp.